The chain runs to 145 residues: Probable DNA-directed RNA polymerases I and III subunit RPAC2 (145 aa).

Residues M1–P52 are disordered. Over residues E12–L39 the composition is skewed to acidic residues.

This sequence belongs to the archaeal Rpo11/eukaryotic RPB11/RPC19 RNA polymerase subunit family. Component of the RNA polymerase I (Pol I) and RNA polymerase III (Pol III) complexes consisting of at least 13 and 17 subunits, respectively.

The protein resides in the nucleus. Its function is as follows. DNA-dependent RNA polymerase catalyzes the transcription of DNA into RNA using the four ribonucleoside triphosphates as substrates. Common core component of RNA polymerases I and III which synthesize ribosomal RNA precursors and small RNAs, such as 5S rRNA and tRNAs, respectively. This Caenorhabditis briggsae protein is Probable DNA-directed RNA polymerases I and III subunit RPAC2 (rpac-19).